Here is a 60-residue protein sequence, read N- to C-terminus: Large ribosomal subunit protein bL32 (60 aa).

Belongs to the bacterial ribosomal protein bL32 family.

The chain is Large ribosomal subunit protein bL32 from Fervidobacterium nodosum (strain ATCC 35602 / DSM 5306 / Rt17-B1).